We begin with the raw amino-acid sequence, 506 residues long: bZIP transcription factor TGA10 (506 aa).

Disordered stretches follow at residues 22–50 and 113–218; these read VSYM…HQHH and PSSI…KTLR. Polar residues-rich tracts occupy residues 25–45, 113–124, 142–152, and 160–180; these read MDSS…SFGG, PSSIQEQRQNSG, PSTTNKMNTGL, and SKRS…NDAP. Residues 207-216 show a composition bias toward basic and acidic residues; sequence DAPKTPDPKT. A bZIP domain is found at 213–257; sequence DPKTLRRLAQNREAARKSRLRKKAYVQQLESSRIRLTQLEQELQR. A basic motif region spans residues 215–235; sequence KTLRRLAQNREAARKSRLRKK. The Nuclear localization signal motif lies at 217-224; it reads LRRLAQNR. The leucine-zipper stretch occupies residues 241–255; it reads LESSRIRLTQLEQEL. A DOG1 domain is found at 288–502; sequence AAVFDMEYAR…RALSSLWHAR (215 aa).

The protein belongs to the bZIP family. In terms of assembly, binds DNA as a dimer. Interacts with TGA2.2. In terms of tissue distribution, specifically expressed in roots.

It localises to the nucleus. In terms of biological role, transcription activator that binds to as1-like elements (5'-TGACGTAAgggaTGACGCA-3') in promoters of target genes. Regulates transcription in response to plant signaling molecules salicylic acid (SA), methyl jasmonate (MJ) and auxin (2,4D) only in leaves. Prevents lateral branching and may repress defense signaling. The sequence is that of bZIP transcription factor TGA10 from Nicotiana tabacum (Common tobacco).